A 142-amino-acid polypeptide reads, in one-letter code: Hemoglobin subunit alpha (142 aa).

Ser1 bears the N-acetylserine mark. A Globin domain is found at 1-142 (SLTDKDKATV…VSLALSERYR (142 aa)). His59 serves as a coordination point for O2. Position 88 (His88) interacts with heme b.

The protein belongs to the globin family. As to quaternary structure, hb1 is a heterotetramer of two alpha chains and two beta-1 chains. Hb2 is a heterotetramer of two alpha chains and two beta-2 chains. As to expression, red blood cells.

In terms of biological role, involved in oxygen transport from gills to the various peripheral tissues. This chain is Hemoglobin subunit alpha (hba), found in Pseudaphritis urvillii (Congolli).